The sequence spans 384 residues: Anhydro-N-acetylmuramic acid kinase (384 aa).

An ATP-binding site is contributed by 9–16 (GTSYDAID).

Belongs to the anhydro-N-acetylmuramic acid kinase family.

The enzyme catalyses 1,6-anhydro-N-acetyl-beta-muramate + ATP + H2O = N-acetyl-D-muramate 6-phosphate + ADP + H(+). It participates in amino-sugar metabolism; 1,6-anhydro-N-acetylmuramate degradation. Its pathway is cell wall biogenesis; peptidoglycan recycling. Catalyzes the specific phosphorylation of 1,6-anhydro-N-acetylmuramic acid (anhMurNAc) with the simultaneous cleavage of the 1,6-anhydro ring, generating MurNAc-6-P. Is required for the utilization of anhMurNAc either imported from the medium or derived from its own cell wall murein, and thus plays a role in cell wall recycling. This is Anhydro-N-acetylmuramic acid kinase from Streptomyces avermitilis (strain ATCC 31267 / DSM 46492 / JCM 5070 / NBRC 14893 / NCIMB 12804 / NRRL 8165 / MA-4680).